Here is a 305-residue protein sequence, read N- to C-terminus: Putative S-adenosyl-L-methionine-dependent methyltransferase Mvan_1344 (305 aa).

S-adenosyl-L-methionine contacts are provided by residues Asp-130 and 159 to 160 (DL).

This sequence belongs to the UPF0677 family.

In terms of biological role, exhibits S-adenosyl-L-methionine-dependent methyltransferase activity. This Mycolicibacterium vanbaalenii (strain DSM 7251 / JCM 13017 / BCRC 16820 / KCTC 9966 / NRRL B-24157 / PYR-1) (Mycobacterium vanbaalenii) protein is Putative S-adenosyl-L-methionine-dependent methyltransferase Mvan_1344.